Consider the following 176-residue polypeptide: Magnetosome protein MamT (176 aa).

Residues 1–11 (MSMEAPRRGRR) are Cytoplasmic-facing. A helical membrane pass occupies residues 12–30 (WVSLGMIALLAAIGLGLYW). The Lumenal portion of the chain corresponds to 31–176 (DQLSTPSGIT…DKKGGMRWQL (146 aa)). The MCR (magnetochrome) 1 signature appears at 89–109 (VKPGTGMPHPYVGDCIQCHLM). Residues Cys-103, Cys-106, His-107, Cys-154, Cys-157, and His-158 each contribute to the heme site. An MCR 2 motif is present at residues 140–160 (ILPTSRQPHPPAGRCIKCHDI).

This sequence belongs to the magnetosome MamT family. The cofactor is heme.

The protein localises to the magnetosome membrane. Its function is as follows. May play a role in magnetite crystal maturation. May transfer electrons to balance the Fe(2+)-Fe(3+) ratio during magnetite formation. The protein is Magnetosome protein MamT (mamT) of Paramagnetospirillum magneticum (strain ATCC 700264 / AMB-1) (Magnetospirillum magneticum).